We begin with the raw amino-acid sequence, 93 residues long: SNTRNFVLRDEEGNEHGVFTGKQPRQAALKAANRGDGTKSNPDVIRLRERGTKKVHVFKAWKEMVEAPKNRPDWMPEKISKPFVKKEKIEKIE.

The tract at residues 1 to 43 is disordered; sequence SNTRNFVLRDEEGNEHGVFTGKQPRQAALKAANRGDGTKSNPD.

Functionally, protects DNA against thermal denaturation and modulates transcription. The sequence is that of Chromosomal protein MC1 from Methanosarcina barkeri.